The primary structure comprises 187 residues: Ribose 1,5-bisphosphate phosphokinase PhnN (187 aa).

10–17 (GPSGSGKD) contacts ATP.

The protein belongs to the ribose 1,5-bisphosphokinase family.

It carries out the reaction alpha-D-ribose 1,5-bisphosphate + ATP = 5-phospho-alpha-D-ribose 1-diphosphate + ADP. The protein operates within metabolic intermediate biosynthesis; 5-phospho-alpha-D-ribose 1-diphosphate biosynthesis; 5-phospho-alpha-D-ribose 1-diphosphate from D-ribose 5-phosphate (route II): step 3/3. Catalyzes the phosphorylation of ribose 1,5-bisphosphate to 5-phospho-D-ribosyl alpha-1-diphosphate (PRPP). The sequence is that of Ribose 1,5-bisphosphate phosphokinase PhnN from Klebsiella pneumoniae subsp. pneumoniae (strain ATCC 700721 / MGH 78578).